Here is a 136-residue protein sequence, read N- to C-terminus: Ribonuclease P protein component (136 aa).

Belongs to the RnpA family. In terms of assembly, consists of a catalytic RNA component (M1 or rnpB) and a protein subunit.

It carries out the reaction Endonucleolytic cleavage of RNA, removing 5'-extranucleotides from tRNA precursor.. RNaseP catalyzes the removal of the 5'-leader sequence from pre-tRNA to produce the mature 5'-terminus. It can also cleave other RNA substrates such as 4.5S RNA. The protein component plays an auxiliary but essential role in vivo by binding to the 5'-leader sequence and broadening the substrate specificity of the ribozyme. The polypeptide is Ribonuclease P protein component (Burkholderia mallei (strain NCTC 10247)).